The primary structure comprises 254 residues: Sensory rhodopsin (254 aa).

Over 1–4 (MTGA) the chain is Extracellular. The chain crosses the membrane as a helical span at residues 5–26 (VTSAYWLAAVAFLIGVGITAAL). Residues 27-35 (YAKLEGSRA) are Cytoplasmic-facing. Residues 36–57 (RTRLAALAVIPGFAGLSYVGMA) traverse the membrane as a helical segment. Topologically, residues 58–71 (LGIGTVTVNGAELV) are extracellular. Residues 72–93 (GLRYVDWVVTTPLLVGFIGYNA) form a helical membrane-spanning segment. At 94-96 (GAS) the chain is on the cytoplasmic side. Residues 97 to 119 (RRAIAGVMIADALMIVFGAAAVV) traverse the membrane as a helical segment. Residues 120 to 123 (SGGT) lie on the Extracellular side of the membrane. Residues 124-151 (LKWALFGVSALFHVSLFAYLYVIFPGGI) form a helical membrane-spanning segment. The Cytoplasmic portion of the chain corresponds to 152–154 (PDD). Residues 155–182 (PMQRGLFSLLKNHVGLLWLAYPFVWLMG) traverse the membrane as a helical segment. The Extracellular segment spans residues 183 to 190 (PAGIGFTG). Residues 191 to 223 (AVGAALTYAFLDVLAKVPYVYFFYARRQAFIDV) traverse the membrane as a helical segment. Position 206 is an N6-(retinylidene)lysine (Lys206). Topologically, residues 224-254 (TDSRAAAKGDGPAVGGEAPVATGDDAPTAAD) are cytoplasmic. A disordered region spans residues 231-254 (KGDGPAVGGEAPVATGDDAPTAAD).

It belongs to the archaeal/bacterial/fungal opsin family.

Its subcellular location is the cell membrane. Functionally, involved in the control of phototaxis. In Halorubrum sodomense, this protein is Sensory rhodopsin (sop).